We begin with the raw amino-acid sequence, 175 residues long: Peptide methionine sulfoxide reductase MsrA (175 aa).

Cys10 is an active-site residue.

This sequence belongs to the MsrA Met sulfoxide reductase family.

It carries out the reaction L-methionyl-[protein] + [thioredoxin]-disulfide + H2O = L-methionyl-(S)-S-oxide-[protein] + [thioredoxin]-dithiol. The enzyme catalyses [thioredoxin]-disulfide + L-methionine + H2O = L-methionine (S)-S-oxide + [thioredoxin]-dithiol. In terms of biological role, has an important function as a repair enzyme for proteins that have been inactivated by oxidation. Catalyzes the reversible oxidation-reduction of methionine sulfoxide in proteins to methionine. This Clavibacter sepedonicus (Clavibacter michiganensis subsp. sepedonicus) protein is Peptide methionine sulfoxide reductase MsrA.